Reading from the N-terminus, the 86-residue chain is Translation initiation factor IF-1 2 (86 aa).

One can recognise an S1-like domain in the interval 1-72 (MAKEELLEME…TKARISFRHK (72 aa)).

Belongs to the IF-1 family. Component of the 30S ribosomal translation pre-initiation complex which assembles on the 30S ribosome in the order IF-2 and IF-3, IF-1 and N-formylmethionyl-tRNA(fMet); mRNA recruitment can occur at any time during PIC assembly.

It localises to the cytoplasm. In terms of biological role, one of the essential components for the initiation of protein synthesis. Stabilizes the binding of IF-2 and IF-3 on the 30S subunit to which N-formylmethionyl-tRNA(fMet) subsequently binds. Helps modulate mRNA selection, yielding the 30S pre-initiation complex (PIC). Upon addition of the 50S ribosomal subunit IF-1, IF-2 and IF-3 are released leaving the mature 70S translation initiation complex. The sequence is that of Translation initiation factor IF-1 2 from Aromatoleum aromaticum (strain DSM 19018 / LMG 30748 / EbN1) (Azoarcus sp. (strain EbN1)).